Reading from the N-terminus, the 180-residue chain is Transmembrane protein 190 (180 aa).

An N-terminal signal peptide occupies residues 1–21 (MVGSGIPALGLLLLMQGSADG). Residues 22–81 (NGIQGFFYPWSCEGDVWDRESCGGQAAIENPNLCLRLRCCYRDGVCYHQRPDENMRRKHM) lie on the Extracellular side of the membrane. The 41-residue stretch at 31 to 71 (WSCEGDVWDRESCGGQAAIENPNLCLRLRCCYRDGVCYHQR) folds into the P-type domain. 3 disulfide bridges follow: Cys33–Cys61, Cys43–Cys60, and Cys55–Cys67. Residues 82–102 (WALGWTCGGLLFLITSICLFW) form a helical membrane-spanning segment. The Cytoplasmic portion of the chain corresponds to 103–180 (WARRHDMLRL…EETEGGDEDD (78 aa)). Positions 131-140 (KDRTPSEKKT) are enriched in basic and acidic residues. The interval 131–180 (KDRTPSEKKTPSVGSIPPAAPTEGALDVSGGTEGEGTEGGEETEGGDEDD) is disordered. Over residues 165–180 (EGTEGGEETEGGDEDD) the composition is skewed to acidic residues.

Its subcellular location is the membrane. This chain is Transmembrane protein 190 (TMEM190), found in Bos taurus (Bovine).